The primary structure comprises 518 residues: Probable bifunctional methylthioribulose-1-phosphate dehydratase/enolase-phosphatase E1 (518 aa).

A methylthioribulose-1-phosphate dehydratase region spans residues 1–242 (MACCGGGRGE…AIKLYQLGID (242 aa)). C114 contributes to the substrate binding site. Zn(2+) is bound by residues H132 and H134. Residue E157 is the Proton donor/acceptor; for methylthioribulose-1-phosphate dehydratase activity of the active site. H207 contributes to the Zn(2+) binding site. An enolase-phosphatase E1 region spans residues 279-518 (VVLDIEGTTT…FRTIKSFSEI (240 aa)). The Mg(2+) site is built by D282 and E284. Substrate is bound by residues 417-418 (SS) and K451. Residue D477 coordinates Mg(2+).

This sequence in the N-terminal section; belongs to the aldolase class II family. MtnB subfamily. It in the C-terminal section; belongs to the HAD-like hydrolase superfamily. MasA/MtnC family. It depends on Zn(2+) as a cofactor. Mg(2+) serves as cofactor.

It catalyses the reaction 5-(methylsulfanyl)-D-ribulose 1-phosphate = 5-methylsulfanyl-2,3-dioxopentyl phosphate + H2O. It carries out the reaction 5-methylsulfanyl-2,3-dioxopentyl phosphate + H2O = 1,2-dihydroxy-5-(methylsulfanyl)pent-1-en-3-one + phosphate. Its pathway is amino-acid biosynthesis; L-methionine biosynthesis via salvage pathway; L-methionine from S-methyl-5-thio-alpha-D-ribose 1-phosphate: step 2/6. It functions in the pathway amino-acid biosynthesis; L-methionine biosynthesis via salvage pathway; L-methionine from S-methyl-5-thio-alpha-D-ribose 1-phosphate: step 3/6. The protein operates within amino-acid biosynthesis; L-methionine biosynthesis via salvage pathway; L-methionine from S-methyl-5-thio-alpha-D-ribose 1-phosphate: step 4/6. This Oryza sativa subsp. indica (Rice) protein is Probable bifunctional methylthioribulose-1-phosphate dehydratase/enolase-phosphatase E1.